Consider the following 265-residue polypeptide: Hydroxyethylthiazole kinase (265 aa).

Methionine 36 is a substrate binding site. 2 residues coordinate ATP: lysine 112 and serine 160. Substrate is bound at residue glycine 187.

It belongs to the Thz kinase family. Requires Mg(2+) as cofactor.

It carries out the reaction 5-(2-hydroxyethyl)-4-methylthiazole + ATP = 4-methyl-5-(2-phosphooxyethyl)-thiazole + ADP + H(+). The protein operates within cofactor biosynthesis; thiamine diphosphate biosynthesis; 4-methyl-5-(2-phosphoethyl)-thiazole from 5-(2-hydroxyethyl)-4-methylthiazole: step 1/1. In terms of biological role, catalyzes the phosphorylation of the hydroxyl group of 4-methyl-5-beta-hydroxyethylthiazole (THZ). This is Hydroxyethylthiazole kinase from Clostridium perfringens (strain ATCC 13124 / DSM 756 / JCM 1290 / NCIMB 6125 / NCTC 8237 / Type A).